A 165-amino-acid polypeptide reads, in one-letter code: SsrA-binding protein (165 aa).

Residues lysine 141 to tyrosine 165 are disordered. Positions aspartate 144 to lysine 159 are enriched in basic and acidic residues.

The protein belongs to the SmpB family.

It localises to the cytoplasm. In terms of biological role, required for rescue of stalled ribosomes mediated by trans-translation. Binds to transfer-messenger RNA (tmRNA), required for stable association of tmRNA with ribosomes. tmRNA and SmpB together mimic tRNA shape, replacing the anticodon stem-loop with SmpB. tmRNA is encoded by the ssrA gene; the 2 termini fold to resemble tRNA(Ala) and it encodes a 'tag peptide', a short internal open reading frame. During trans-translation Ala-aminoacylated tmRNA acts like a tRNA, entering the A-site of stalled ribosomes, displacing the stalled mRNA. The ribosome then switches to translate the ORF on the tmRNA; the nascent peptide is terminated with the 'tag peptide' encoded by the tmRNA and targeted for degradation. The ribosome is freed to recommence translation, which seems to be the essential function of trans-translation. The polypeptide is SsrA-binding protein (Prochlorococcus marinus (strain SARG / CCMP1375 / SS120)).